Consider the following 217-residue polypeptide: Small ribosomal subunit protein uS3 (217 aa).

A KH type-2 domain is found at 40-110 (IRDLINKWFN…EVYINIHEVR (71 aa)).

Belongs to the universal ribosomal protein uS3 family. Part of the 30S ribosomal subunit. Forms a tight complex with proteins S10 and S14.

In terms of biological role, binds the lower part of the 30S subunit head. Binds mRNA in the 70S ribosome, positioning it for translation. The polypeptide is Small ribosomal subunit protein uS3 (Rickettsia typhi (strain ATCC VR-144 / Wilmington)).